The sequence spans 412 residues: Subtilisin-like protease 6 (412 aa).

The first 20 residues, 1–20, serve as a signal peptide directing secretion; the sequence is MGFITKAIPIVLAALSTVNG. Positions 21-127 are excised as a propeptide; the sequence is AKILEAGPHA…VRTSTNGTNL (107 aa). Residues 36-120 enclose the Inhibitor I9 domain; the sequence is KYIVVMKREV…YIEPDFVVRT (85 aa). 2 N-linked (GlcNAc...) asparagine glycosylation sites follow: Asn-123 and Asn-126. Residues 135-412 form the Peptidase S8 domain; it reads SWGLARVSSK…SKLIYNGSGK (278 aa). Residues Asp-167 and His-198 each act as charge relay system in the active site. N-linked (GlcNAc...) asparagine glycans are attached at residues Asn-252 and Asn-264. Ser-358 serves as the catalytic Charge relay system. Asn-408 carries an N-linked (GlcNAc...) asparagine glycan.

It belongs to the peptidase S8 family.

It is found in the secreted. Functionally, secreted subtilisin-like serine protease with keratinolytic activity that contributes to pathogenicity. The chain is Subtilisin-like protease 6 (SUB6) from Trichophyton tonsurans (Scalp ringworm fungus).